An 84-amino-acid chain; its full sequence is MASARTLVLLLIGAVLMCQVSADSELLNEILAAHMEEDMPEKRCIDRYRSNICGSVIRPLDCTRRKSRMGRFARTNCKKLCGFC.

Positions 1 to 22 (MASARTLVLLLIGAVLMCQVSA) are cleaved as a signal peptide. Residues 23–41 (DSELLNEILAAHMEEDMPE) constitute a propeptide that is removed on maturation. The ShKT domain occupies 44–84 (CIDRYRSNICGSVIRPLDCTRRKSRMGRFARTNCKKLCGFC). 3 disulfide bridges follow: Cys44-Cys84, Cys53-Cys77, and Cys62-Cys81.

This sequence belongs to the sea anemone 8 toxin family.

The protein resides in the secreted. Its subcellular location is the nematocyst. The protein is U-actitoxin-Avd8e of Anemonia viridis (Snakelocks anemone).